Reading from the N-terminus, the 108-residue chain is UPF0060 membrane protein CJA_3703 (108 aa).

The next 4 helical transmembrane spans lie at 6 to 26, 31 to 51, 61 to 81, and 85 to 105; these read LLFV…YLWL, SIWL…LLTL, AAYG…VDGV, and AYDW…AMGW.

It belongs to the UPF0060 family.

It localises to the cell inner membrane. This chain is UPF0060 membrane protein CJA_3703, found in Cellvibrio japonicus (strain Ueda107) (Pseudomonas fluorescens subsp. cellulosa).